A 189-amino-acid polypeptide reads, in one-letter code: MKNVLLPNNQERKRSLSNSEIFTFDDKRLLIGQINSLFGVQGWVKIFSHTHPRENILFYQPWHINVDANWQTLEIIQGCVQAKTIVAQIKDVFDKEQARAYIGIDLYIKKSQLPQLKSGEYYWDDLIGLEVINKAKIILGKVSNLVDTGSNNVLVINGEREHWVPYISPFLIKVDIDNQIILVDWDENF.

Residues 118-189 (SGEYYWDDLI…IILVDWDENF (72 aa)) form the PRC barrel domain.

This sequence belongs to the RimM family. As to quaternary structure, binds ribosomal protein uS19.

Its subcellular location is the cytoplasm. Its function is as follows. An accessory protein needed during the final step in the assembly of 30S ribosomal subunit, possibly for assembly of the head region. Essential for efficient processing of 16S rRNA. May be needed both before and after RbfA during the maturation of 16S rRNA. It has affinity for free ribosomal 30S subunits but not for 70S ribosomes. This is Ribosome maturation factor RimM from Ruthia magnifica subsp. Calyptogena magnifica.